Here is a 377-residue protein sequence, read N- to C-terminus: Chaperone protein DnaJ (377 aa).

Residues 5-70 (DCYEVLGISR…QKKAAYDQYG (66 aa)) form the J domain. Residues 133–211 (GISKEIQIPT…CHGHGRYERS (79 aa)) form a CR-type zinc finger. Cys146, Cys149, Cys163, Cys166, Cys185, Cys188, Cys199, and Cys202 together coordinate Zn(2+). 4 CXXCXGXG motif repeats span residues 146–153 (CEQCNGSG), 163–170 (CGTCYGQG), 185–192 (CPTCRGQG), and 199–206 (CHKCHGHG).

Belongs to the DnaJ family. As to quaternary structure, homodimer. It depends on Zn(2+) as a cofactor.

It is found in the cytoplasm. Participates actively in the response to hyperosmotic and heat shock by preventing the aggregation of stress-denatured proteins and by disaggregating proteins, also in an autonomous, DnaK-independent fashion. Unfolded proteins bind initially to DnaJ; upon interaction with the DnaJ-bound protein, DnaK hydrolyzes its bound ATP, resulting in the formation of a stable complex. GrpE releases ADP from DnaK; ATP binding to DnaK triggers the release of the substrate protein, thus completing the reaction cycle. Several rounds of ATP-dependent interactions between DnaJ, DnaK and GrpE are required for fully efficient folding. Also involved, together with DnaK and GrpE, in the DNA replication of plasmids through activation of initiation proteins. The chain is Chaperone protein DnaJ from Psychromonas ingrahamii (strain DSM 17664 / CCUG 51855 / 37).